A 307-amino-acid polypeptide reads, in one-letter code: Ribosomal protein L11 methyltransferase (307 aa).

Residues Thr156, Gly177, Asp199, and Asn243 each contribute to the S-adenosyl-L-methionine site.

The protein belongs to the methyltransferase superfamily. PrmA family.

The protein resides in the cytoplasm. The enzyme catalyses L-lysyl-[protein] + 3 S-adenosyl-L-methionine = N(6),N(6),N(6)-trimethyl-L-lysyl-[protein] + 3 S-adenosyl-L-homocysteine + 3 H(+). Functionally, methylates ribosomal protein L11. This chain is Ribosomal protein L11 methyltransferase, found in Syntrophomonas wolfei subsp. wolfei (strain DSM 2245B / Goettingen).